The sequence spans 348 residues: NADH-quinone oxidoreductase subunit H (348 aa).

Transmembrane regions (helical) follow at residues 10–30 (LPLFIVVGKTLLLLTVLLVLI), 82–102 (GVFLLAPFVSATLALSAWAVV), 115–135 (VGLLYILAISSLEVYGVIMGG), 161–181 (IGFVLVTVILVSGSLDLTTIV), 199–219 (LLDWNWLILFPMFIIFFISAL), 251–271 (LFFLGEYVAIVLMCALTTILF), 287–307 (VPGVIWFVLKVCFVFFWFAMV), and 322–342 (LGWKVFLPISLAMVVITAAIL).

This sequence belongs to the complex I subunit 1 family. NDH-1 is composed of 14 different subunits. Subunits NuoA, H, J, K, L, M, N constitute the membrane sector of the complex.

The protein resides in the cell inner membrane. It catalyses the reaction a quinone + NADH + 5 H(+)(in) = a quinol + NAD(+) + 4 H(+)(out). Its function is as follows. NDH-1 shuttles electrons from NADH, via FMN and iron-sulfur (Fe-S) centers, to quinones in the respiratory chain. The immediate electron acceptor for the enzyme in this species is believed to be ubiquinone. Couples the redox reaction to proton translocation (for every two electrons transferred, four hydrogen ions are translocated across the cytoplasmic membrane), and thus conserves the redox energy in a proton gradient. This subunit may bind ubiquinone. This is NADH-quinone oxidoreductase subunit H from Bartonella bacilliformis (strain ATCC 35685 / KC583 / Herrer 020/F12,63).